The following is a 321-amino-acid chain: Ribosomal RNA small subunit methyltransferase H (321 aa).

S-adenosyl-L-methionine contacts are provided by residues 40 to 42 (GGH), Asp60, Phe84, Asp106, and Gln113.

Belongs to the methyltransferase superfamily. RsmH family.

Its subcellular location is the cytoplasm. The enzyme catalyses cytidine(1402) in 16S rRNA + S-adenosyl-L-methionine = N(4)-methylcytidine(1402) in 16S rRNA + S-adenosyl-L-homocysteine + H(+). In terms of biological role, specifically methylates the N4 position of cytidine in position 1402 (C1402) of 16S rRNA. This Haemophilus influenzae (strain PittEE) protein is Ribosomal RNA small subunit methyltransferase H.